The primary structure comprises 291 residues: ATP synthase subunit a (291 aa).

The next 7 helical transmembrane spans lie at Leu-50 to Val-70, Ile-108 to Ile-128, Pro-129 to Pro-149, Asp-161 to Ile-181, Pro-203 to Ala-223, Leu-241 to Trp-261, and Ala-262 to Val-282.

Belongs to the ATPase A chain family. F-type ATPases have 2 components, CF(1) - the catalytic core - and CF(0) - the membrane proton channel. CF(1) has five subunits: alpha(3), beta(3), gamma(1), delta(1), epsilon(1). CF(0) has three main subunits: a(1), b(2) and c(9-12). The alpha and beta chains form an alternating ring which encloses part of the gamma chain. CF(1) is attached to CF(0) by a central stalk formed by the gamma and epsilon chains, while a peripheral stalk is formed by the delta and b chains.

It localises to the cell inner membrane. Its function is as follows. Key component of the proton channel; it plays a direct role in the translocation of protons across the membrane. This is ATP synthase subunit a from Acinetobacter baumannii (strain AB307-0294).